Consider the following 1190-residue polypeptide: Pumilio homolog 1 (1190 aa).

Disordered regions lie at residues 38–74 (LTSG…GVAG), 491–531 (SNSA…QQTD), 611–675 (ANGP…NSSL), and 744–777 (GPVG…LNLG). 4 stretches are compositionally biased toward low complexity: residues 491-508 (SNSA…GQQQ), 518-531 (PLTP…QQTD), 628-675 (QQPQ…NSSL), and 765-777 (LSSH…LNLG). In terms of domain architecture, PUM-HD spans 830 to 1172 (GRSRLLEDFR…HILAKLEKYY (343 aa)). Pumilio repeat units follow at residues 850–885 (EIAG…LVFN), 886–921 (EILQ…ALAE), 922–959 (RIRG…EMVR), 960–995 (ELDG…FIID), 996–1031 (AFKS…PILE), 1032–1067 (ELHQ…KIVA), 1068–1103 (EIRG…MLID), and 1107–1146 (TMND…IVMH). Residues 865 to 869 (SRFIQ) are adenine-nucleotide binding in RNA target. The uracil-nucleotide binding in RNA target stretch occupies residues 901-905 (NYVIQ). The segment at 937-941 (CRVIQ) is adenine-nucleotide binding in RNA target. The tract at residues 975–979 (NHVVQ) is non-specific-nucleotide binding in RNA target. The interval 1011–1015 (CRVIQ) is adenine-nucleotide binding in RNA target. The tract at residues 1047–1051 (NYVIQ) is uracil-nucleotide binding in RNA target. Residues 1083–1087 (SNVVE) form a guanine-nucleotide binding in RNA target region. Residues 1126 to 1130 (NYVVQ) form a uracil-nucleotide binding in RNA target region.

As to quaternary structure, interacts with cpeb1-a; interacts with unphosphorylated cpeb1-a but not phosphorylated. Component of a complex with papd4, sympk, tacc3, parn, dazl and cpeb1. In terms of processing, phosphorylated. Phosphorylation takes place at the time of dissociation of cpeb1-a from pum1 and the translational activation of ccnb1 mRNA. In terms of tissue distribution, present in oocytes (at protein level).

It localises to the cytoplasm. The protein resides in the P-body. Its subcellular location is the cytoplasmic granule. Its function is as follows. Sequence-specific RNA-binding protein that acts as a post-transcriptional repressor by binding the 3'-UTR of mRNA targets. Binds to an RNA consensus sequence, the Pumilio Response Element (PRE), 5'-UGUANAUA-3', that is related to the Nanos Response Element (NRE). Mediates post-transcriptional repression of transcripts via different mechanisms: acts via direct recruitment of deadenylase complexes leading to translational inhibition and mRNA degradation. Also mediates deadenylation-independent repression by promoting accessibility of miRNAs. Acts as a post-transcriptional repressor of ccnb1 mRNA during oocyte maturation. The polypeptide is Pumilio homolog 1 (Xenopus laevis (African clawed frog)).